Reading from the N-terminus, the 1000-residue chain is MIVSDNFTSSSNTGADLASSVSENRSHFIAESHYREWVEGSGVAPEIARLNVRSLSGMTPYEYLLYSDEPALRRNDGRLRDTWLKRYAFVEHGGWWCSGIDIKTGKDSLWGCFKGDRPRKDREDKKPIKYEHPPRVATEIFTLKVDRGTWRKIAKRHKVELPETDQGFWEWVLAHPELPIIITEGAKKAGALLTAGYCAIGLPGIYNGYRTPKNDHGEPMRQLRHLIPELDLLAKNNRAIAFCFDQDKKPKTIKAVNGAIQTTGALLEKAGAKVSVITWHQDAKGVDDLIVEHGAKALHNRYKHRKPLAVWEMDNLTDITTQVDLTVDQRYLDIDPRAIPKDAQIIFIKSAKGTGKTEWLGKIVKLAQDDCARVLVLTHRIQLAKELARRLDIDHISELDSSPTGGALGMAMCIDSLHPDSQAHFNFMEWHGAHIVLDEIEQVLGHALGSSTCTQDRAKILETFYNLILYALRTGGKLYCSDADLSPISYELIKYILDGCEFKPFTILNTYKPCLEQQRDLFFYEGNDPRDLLTNLRQAIENGEKTLVFTAAQKTASTYSTQNLESLFREKYPDKRILRIDAESVAEPGHPAYGCIDSLNAILPLYDIVLCSPAVETGVSIDIKDHFDSVWGMGSGVQTVNGFCQGLERLRDNVPRHVWIPKFSPHSNRIANGGYTAKAIARDQHRYAELTHKLIGEHAAECSGLEDSLKPFLWAYCRYAALANRGFGSYREAILNKLLSEGYVQKDLSEIDPALAKDYRDELKAVKDHNYLQERVAISKVENPDDRQYEKLKRQRAKSETERHQERHGKLSRSYGLTVTPELVEKDDDGWYSQLQLEYYLTVGKAFCSARDRAKYDQLQHEGFVFKPDINRRSLSPKIHLLELLNIHQFLKPGVTFTGASLEGFKENCLRYAKPIKWILGRTITDKMSPLEIAQALLGKLDRKLEYKGRFGSRDNRQRVYEAIAPNDQREKVFAHWLQRDQAKLGAVSNPCINRFIQEA.

Residues 787–809 (RQYEKLKRQRAKSETERHQERHG) show a composition bias toward basic and acidic residues. The tract at residues 787–812 (RQYEKLKRQRAKSETERHQERHGKLS) is disordered.

This is an uncharacterized protein from Picosynechococcus sp. (strain ATCC 27264 / PCC 7002 / PR-6) (Agmenellum quadruplicatum).